The primary structure comprises 331 residues: MKKRLAVLLVIVLTITFSFSVTTRIKDIAFFRGARDNQLFGIGLVVGLNGTGDSGNVNSPLLLEMMKKFGVQVSENDLKSKNTALVMVLADIPPFAKEGMRIDCVVASIADAKSLAGGYLLQTPLYGADGKVYAVAQGSVIIGGEDVKLSSNLQKRYRVVGYLLEGAIVERDIPSDMLDGDSVTILLRQPDITTAARVARAINEKFEMDLAKAIDPSAIKLTVPSAFQDDLITFLSLVEEIEVQPDVPARIVVNERTGTVLFGGDVKLSDFVISYGNFTISVTGGKIGDKDATISNLVSALKAAGATPQDIIAILQVIYESGYITGELIIM.

An N-terminal signal peptide occupies residues 1–23; sequence MKKRLAVLLVIVLTITFSFSVTT.

In terms of assembly, the basal body constitutes a major portion of the flagellar organelle and consists of four rings (L,P,S, and M) mounted on a central rod.

Its subcellular location is the periplasm. The protein localises to the bacterial flagellum basal body. In terms of biological role, assembles around the rod to form the L-ring and probably protects the motor/basal body from shearing forces during rotation. The sequence is that of Flagellar P-ring protein (flgI) from Thermotoga maritima (strain ATCC 43589 / DSM 3109 / JCM 10099 / NBRC 100826 / MSB8).